Here is a 344-residue protein sequence, read N- to C-terminus: GTPase Obg (344 aa).

Residues 1–159 (MKFLDLCKVY…RTLWLRLKLI (159 aa)) form the Obg domain. The disordered stretch occupies residues 126-146 (GNLHFKSSTNQAPRRSNPGQD). Positions 130 to 144 (FKSSTNQAPRRSNPG) are enriched in polar residues. One can recognise an OBG-type G domain in the interval 160–327 (ADVGLLGLPN…VLRKLRGEIS (168 aa)). GTP-binding positions include 166 to 173 (GLPNAGKS), 191 to 195 (FTTLH), 212 to 215 (DIPG), 279 to 282 (NKID), and 308 to 310 (SGV). Mg(2+) contacts are provided by S173 and T193.

This sequence belongs to the TRAFAC class OBG-HflX-like GTPase superfamily. OBG GTPase family. In terms of assembly, monomer. The cofactor is Mg(2+).

It localises to the cytoplasm. An essential GTPase which binds GTP, GDP and possibly (p)ppGpp with moderate affinity, with high nucleotide exchange rates and a fairly low GTP hydrolysis rate. Plays a role in control of the cell cycle, stress response, ribosome biogenesis and in those bacteria that undergo differentiation, in morphogenesis control. The sequence is that of GTPase Obg from Roseobacter denitrificans (strain ATCC 33942 / OCh 114) (Erythrobacter sp. (strain OCh 114)).